Here is a 139-residue protein sequence, read N- to C-terminus: Putative pre-16S rRNA nuclease (139 aa).

The protein belongs to the YqgF nuclease family.

It is found in the cytoplasm. In terms of biological role, could be a nuclease involved in processing of the 5'-end of pre-16S rRNA. This Pectobacterium carotovorum subsp. carotovorum (strain PC1) protein is Putative pre-16S rRNA nuclease.